The primary structure comprises 367 residues: MFDPASFVKEIGPQLKQKVGNERVLAAVSGGVDSTTAAVLAYNLLGNKVIPVLIDTGFLRKNEAEKIKAYLSNVLPNLIVVDERETFTSEIEGMEEAEAKRKKFRELFYSSISSLMRKFNAKYLMQGTIAADWVETQGGIKTQHNVLVQIGIDTEKEWGFTLIEPLADLYKNEVRELARYLKLPKEISERQPFPGPGLLVRTIGKLTREKLEVVREANDIVEKYLDPFNYSQYFAVSFESDGNFVILDGIDAFLYKARATGVKGDVRAYGNIAKVECSDINAAKSFVDTLVKYDITHVLCSLDERSNGKYSIAIRAVITEDFMTADYARIPKEVLEKISSEILQKIPNVKEVLYDVTSKPPATIEFE.

Residues 2–190 (FDPASFVKEI…LKLPKEISER (189 aa)) enclose the GMPS ATP-PPase domain. 29–35 (SGGVDST) serves as a coordination point for ATP.

Heterodimer composed of a glutamine amidotransferase subunit (A) and a GMP-binding subunit (B).

The enzyme catalyses XMP + L-glutamine + ATP + H2O = GMP + L-glutamate + AMP + diphosphate + 2 H(+). It participates in purine metabolism; GMP biosynthesis; GMP from XMP (L-Gln route): step 1/1. Catalyzes the synthesis of GMP from XMP. The chain is GMP synthase [glutamine-hydrolyzing] subunit B from Saccharolobus islandicus (strain M.16.27) (Sulfolobus islandicus).